The following is an 893-amino-acid chain: AP-4 complex accessory subunit RUSC1 (893 aa).

4 disordered regions span residues 31–223, 237–332, 339–358, and 366–444; these read ELRE…GKAE, EKTE…KDRS, SPDT…APPR, and LRSR…RAHA. The span at 77 to 87 shows a compositional bias: polar residues; that stretch reads HGSSIENQQDP. Composition is skewed to low complexity over residues 95–117 and 149–165; these read SPSD…DESP and PSTC…DSCS. Polar residues predominate over residues 177–187; the sequence is SNCNALTTCQD. The span at 237-257 shows a compositional bias: basic and acidic residues; that stretch reads EKTEAGWKTIEDSDSGRKTDE. 2 stretches are compositionally biased toward pro residues: residues 373-382 and 390-399; these read QPPPVPPRDP and PPRPPPPPVP. The interval 463–598 is interaction with TRAF6; that stretch reads MAEAQSGTGQ…FHAFILGLLN (136 aa). Residues 515-659 enclose the RUN domain; sequence DVGHLVLTTL…LTFHLDLLFE (145 aa). The tract at residues 599-665 is interaction with IKBKG; sequence TKQLELWFSS…LLFEHHHHLP (67 aa). Disordered regions lie at residues 700–721 and 751–772; these read RGTS…PAGS and HGTT…TPGR. Low complexity-rich tracts occupy residues 702-714 and 754-770; these read TSGE…STPS and TAEA…QTTP. The SH3 domain maps to 835-893; sequence QADRAVRALCDHTAAGPDQLSFQRGELLRVIATVDEDWLRCGRDGVEGLVPVGYTSLVL.

As to quaternary structure, associated component of the adapter-like complex 4 (AP-4). Interacts with IKBKG and TRAF6. Interacts with F-actin, acetylated actin, TUBB3, STX1A, KIF5B and KLC1. Post-translationally, phosphorylated on serine residues following nuclear translocation. In terms of processing, polyubiquitinated; polyubiquitination involves TRAF6. In terms of tissue distribution, expressed in brain, brain stem and spinal cord (at protein level).

It localises to the cytoplasm. Its subcellular location is the nucleus. It is found in the cytoskeleton. The protein localises to the cytoplasmic vesicle. The protein resides in the early endosome. It localises to the postsynaptic density. Its subcellular location is the golgi apparatus. Its function is as follows. Associates with the adapter-like complex 4 (AP-4) and may therefore play a role in vesicular trafficking of proteins at the trans-Golgi network. Signaling adapter which plays a role in neuronal differentiation. Involved in regulation of NGF-dependent neurite outgrowth. May play a role in neuronal vesicular trafficking, specifically involving pre-synaptic membrane proteins. Seems to be involved in signaling pathways that are regulated by the prolonged activation of MAPK. Can regulate the polyubiquitination of IKBKG and thus may be involved in regulation of the NF-kappa-B pathway. In Mus musculus (Mouse), this protein is AP-4 complex accessory subunit RUSC1.